The sequence spans 207 residues: Cilia- and flagella-associated protein 418 (207 aa).

Positions Met-1–Asn-75 are required for interaction with FAM161A. Positions Met-26 to Arg-52 are disordered. Residues Ser-39–Arg-52 are compositionally biased toward basic and acidic residues.

As to quaternary structure, interacts (via N-terminus) with FAM161A (via central region); the interaction is direct. In terms of tissue distribution, widely expressed, with highest levels in heart and brain. Also expressed in the retina (at protein level).

It is found in the cytoplasm. It localises to the photoreceptor inner segment. May be involved in photoreceptor outer segment disk morphogenesis. This chain is Cilia- and flagella-associated protein 418, found in Homo sapiens (Human).